A 292-amino-acid chain; its full sequence is Non-homologous end joining protein Ku (292 aa).

The region spanning 9 to 187 is the Ku domain; sequence ITFGLVNVPV…TVPPITEREL (179 aa). Residues 264–285 show a composition bias toward low complexity; the sequence is AASAFPAAEKAPAGKNAATASA. The segment at 264–292 is disordered; that stretch reads AASAFPAAEKAPAGKNAATASAKKARKLA.

It belongs to the prokaryotic Ku family. Homodimer. Interacts with LigD.

With LigD forms a non-homologous end joining (NHEJ) DNA repair enzyme, which repairs dsDNA breaks with reduced fidelity. Binds linear dsDNA with 5'- and 3'- overhangs but not closed circular dsDNA nor ssDNA. Recruits and stimulates the ligase activity of LigD. This Leifsonia xyli subsp. xyli (strain CTCB07) protein is Non-homologous end joining protein Ku.